The primary structure comprises 1007 residues: MAEAAALFSLSAAAVVEDVLRQHGCRLSDRDLASRRAEEAAARRNEAAGWLRRTVGAVAARDLPEEPSEEEFRLGLRNGQILCGALNRVHPGAVPKACAHVVFVNLIRSRCAVCHCSVMVVVNTAADSVLQPDGAALSAFQYFENVRNFLVAAQEIGLPCFEASDLEQGGKSARVVNCVLALKSYGDWKQCGGTGPWKYGGNLKPSASGKSFVRKNSEPFRRCQSMNEGEVPYEEAGFSGDYHLDSGDMSTSRPLKMLVSAVLSDKRPDEVPQVKAALKNGTDGTKSFSKSKMDTIEVYSKHRQTKKEAYGEVTLKQYSMLQLQSKHVEELKADIRATKAGMEFMQMKYSEDINILGRHLFSLAHAASGYHIVLEENRKLYNQVQDLKGSIRVYCRVRPFLPGQVSSCAVGSIDEGNITIITPSKSGKEGRKTFSFNKVFGPSATQDEVFLDTQPLIRSVLDGYNVCIFAYGQTGSGKTYTMSGPKNMTEQTQGVNYRALSDLFKLAEQRKGAFIYDIAVQMIEIYNEQVRDLLVNDGLNKRLEIRNNSQNGLNVPDASLVCVASTMDVMELMNVGQKNRAVGATALNDRSSRSHSCLTVHVQGRDLTSGTILRGCMHLVDLAGSERVDKSEVTGERLKEAQHINKSLSALGDVIASLAQKSAHVPYRNSKLTQLLQDSLGGQAKTLMFVHISPESDALGESISTLKFAERVSTVELGAARLNKESGEVKELKEQIARLKSSLAMKDSGSEQNINRDPEAFNMKMPSPGFSNRRQGSCELVSSQTNFRQPMEDVGNIEVRANPTLRQKKPSFDLQDLLASNDSPSWPDSISRANFQMGEERVTIGGEWIDKVVVNNNNSVGDWEGDSAALPDFFYQRYHSGTRDKQYLRNNSRKKDGNEFEQQRPRFYSTNTDDSDDIDIATSDSSESDALWQFNVQSINSSISENGSKIKKPQTKLRESSDTRTPLHSQIPSASRKTSNGNRSGRQPLSGSDSRRLSSNGRHAGTK.

Residues 41-187 (AARRNEAAGW…CVLALKSYGD (147 aa)) enclose the Calponin-homology (CH) domain. The Kinesin motor domain maps to 390–715 (SIRVYCRVRP…LKFAERVSTV (326 aa)). 472–479 (GQTGSGKT) contributes to the ATP binding site. Residues 718–748 (GAARLNKESGEVKELKEQIARLKSSLAMKDS) adopt a coiled-coil conformation. Residues 885-904 (KQYLRNNSRKKDGNEFEQQR) show a composition bias toward basic and acidic residues. 2 disordered regions span residues 885 to 924 (KQYL…ATSD) and 944 to 1007 (SENG…AGTK). Residues 963-1001 (TRTPLHSQIPSASRKTSNGNRSGRQPLSGSDSRRLSSNG) show a composition bias toward polar residues.

Belongs to the TRAFAC class myosin-kinesin ATPase superfamily. Kinesin family. KIN-14 subfamily.

The protein is Kinesin-like protein KIN-14F of Oryza sativa subsp. japonica (Rice).